Consider the following 84-residue polypeptide: MPSANLHPIVLTGVIGLMLLIRLRCTFTSTFSLPPLVTLNQIIALSFCGLLLNSISRAERACYYNYSVDSSKQQHISISTPNGK.

Topologically, residues 1 to 4 (MPSA) are lumenal. Residues 5–25 (NLHPIVLTGVIGLMLLIRLRC) traverse the membrane as a helical segment. Residues 26–30 (TFTST) lie on the Cytoplasmic side of the membrane. Residues 31-51 (FSLPPLVTLNQIIALSFCGLL) form a helical membrane-spanning segment. Over 52-84 (LNSISRAERACYYNYSVDSSKQQHISISTPNGK) the chain is Lumenal.

It belongs to the carmovirus double gene block protein 2 family.

Its subcellular location is the host endoplasmic reticulum membrane. Functionally, cell-to-cell movement function. The polypeptide is Double gene block protein 2 (Carnation mottle virus (isolate China/Shanghai) (CarMV)).